Reading from the N-terminus, the 211-residue chain is N-(5'-phosphoribosyl)anthranilate isomerase (211 aa).

This sequence belongs to the TrpF family.

It carries out the reaction N-(5-phospho-beta-D-ribosyl)anthranilate = 1-(2-carboxyphenylamino)-1-deoxy-D-ribulose 5-phosphate. It participates in amino-acid biosynthesis; L-tryptophan biosynthesis; L-tryptophan from chorismate: step 3/5. The polypeptide is N-(5'-phosphoribosyl)anthranilate isomerase (Hyphomonas neptunium (strain ATCC 15444)).